The sequence spans 756 residues: ATP-dependent zinc metalloprotease FtsH (756 aa).

Topologically, residues 1–44 (MGVPAGMPHPNGLQPQRKDKALAQNPNTPQKGSEAFLKKLIHSS) are cytoplasmic. The chain crosses the membrane as a helical span at residues 45 to 65 (WFFPGAAIVVMLGFLMASFFT). The Extracellular segment spans residues 66-148 (QPSRQVDTNV…SYTDQPVEHS (83 aa)). The chain crosses the membrane as a helical span at residues 149–169 (FLGSLVSLLLPILLFGVLFWF). The Cytoplasmic segment spans residues 170 to 756 (LMGRVGGGSS…NQNGAENERG (587 aa)). An ATP-binding site is contributed by 241-248 (GPPGTGKT). Residue His-463 coordinates Zn(2+). The active site involves Glu-464. His-467 and Asp-539 together coordinate Zn(2+). 2 stretches are compositionally biased toward basic and acidic residues: residues 647-662 (PEREHWYSKPTRERTD) and 672-681 (LAKEAEKSEE). A disordered region spans residues 647-756 (PEREHWYSKP…NQNGAENERG (110 aa)). Low complexity-rich tracts occupy residues 684–703 (AEAPTVPVAPAAPAQQVPVA) and 713–724 (PLTDPDADPTVA). A compositionally biased stretch (polar residues) spans 744 to 756 (GTPNQNGAENERG).

This sequence in the central section; belongs to the AAA ATPase family. It in the C-terminal section; belongs to the peptidase M41 family. Homohexamer. Zn(2+) is required as a cofactor.

It localises to the cell membrane. Acts as a processive, ATP-dependent zinc metallopeptidase for both cytoplasmic and membrane proteins. Plays a role in the quality control of integral membrane proteins. In Rothia mucilaginosa (strain DY-18) (Stomatococcus mucilaginosus), this protein is ATP-dependent zinc metalloprotease FtsH.